A 341-amino-acid chain; its full sequence is Small ribosomal subunit biogenesis GTPase RsgA (341 aa).

Residues 112–268 (RQQLIAANLD…LIDTPGMREL (157 aa)) form the CP-type G domain. GTP-binding positions include 157–160 (TKVD) and 210–218 (GSSGAGKST). Zn(2+) is bound by residues Cys-290, Cys-295, His-297, and Cys-303.

The protein belongs to the TRAFAC class YlqF/YawG GTPase family. RsgA subfamily. As to quaternary structure, monomer. Associates with 30S ribosomal subunit, binds 16S rRNA. Zn(2+) is required as a cofactor.

The protein localises to the cytoplasm. Its function is as follows. One of several proteins that assist in the late maturation steps of the functional core of the 30S ribosomal subunit. Helps release RbfA from mature subunits. May play a role in the assembly of ribosomal proteins into the subunit. Circularly permuted GTPase that catalyzes slow GTP hydrolysis, GTPase activity is stimulated by the 30S ribosomal subunit. This chain is Small ribosomal subunit biogenesis GTPase RsgA, found in Xylella fastidiosa (strain Temecula1 / ATCC 700964).